The chain runs to 483 residues: Keratin, type II cytoskeletal 8 (483 aa).

Residues 1–25 (MSVRVTQKSYKMSTSGPRAFSSRSF) show a composition bias toward polar residues. A disordered region spans residues 1–43 (MSVRVTQKSYKMSTSGPRAFSSRSFTSGPGARISSSSFSRVGS). The interval 1–90 (MSVRVTQKSY…DPNIQAVRTQ (90 aa)) is head. The residue at position 9 (S9) is a Phosphoserine; by PKC/PRKCE. K11 is covalently cross-linked (Glycyl lysine isopeptide (Lys-Gly) (interchain with G-Cter in SUMO2)). Residues S13, S15, S21, and S22 each carry the phosphoserine modification. An Omega-N-methylarginine modification is found at R23. S24 is modified (phosphoserine; by PKC/PRKCE). Phosphoserine is present on S24. Phosphothreonine is present on T26. Low complexity predominate over residues 26–43 (TSGPGARISSSSFSRVGS). At S27 the chain carries Phosphoserine. Omega-N-methylarginine is present on R32. Phosphoserine is present on residues S34, S37, and S39. An Omega-N-methylarginine modification is found at R40. Phosphoserine is present on residues S43, S44, and S47. R49 is subject to Asymmetric dimethylarginine; alternate. R49 is modified (omega-N-methylarginine; alternate). Position 51 is a phosphoserine (S51). Positions 91-126 (EKEQIKTLNNKFASFIDKVRFLEQQNKMLETKWSLL) are coil 1A. An IF rod domain is found at 91 to 402 (EKEQIKTLNN…KLLEGEESRL (312 aa)). At K101 the chain carries N6-malonyllysine. Glycyl lysine isopeptide (Lys-Gly) (interchain with G-Cter in SUMO2) cross-links involve residues K122 and K130. The tract at residues 127–143 (QQQKTSRSNMDNMFESY) is linker 1. The tract at residues 144-235 (INNLRRQLEA…QIHEEEIREL (92 aa)) is coil 1B. A Glycyl lysine isopeptide (Lys-Gly) (interchain with G-Cter in SUMO1); alternate cross-link involves residue K197. K197 is covalently cross-linked (Glycyl lysine isopeptide (Lys-Gly) (interchain with G-Cter in SUMO2); alternate). Position 207 is an N6-acetyllysine (K207). The segment at 236–259 (QSQISDTSVVLSMDNSRSLDMDSI) is linker 12. 3 positions are modified to phosphoserine: S253, S258, and S274. Positions 260–398 (IAEVRAQYEE…ATYRKLLEGE (139 aa)) are coil 2. Residues 261–382 (AEVRAQYEEI…EYQELMNVKL (122 aa)) are necessary for interaction with PNN. A Glycyl lysine isopeptide (Lys-Gly) (interchain with G-Cter in SUMO2) cross-link involves residue K285. Residue K295 forms a Glycyl lysine isopeptide (Lys-Gly) (interchain with G-Cter in SUMO2); alternate linkage. K295 is modified (N6-acetyllysine; alternate). Residue K304 forms a Glycyl lysine isopeptide (Lys-Gly) (interchain with G-Cter in SUMO2) linkage. K325 is covalently cross-linked (Glycyl lysine isopeptide (Lys-Gly) (interchain with G-Cter in SUMO2); alternate). N6-acetyllysine; alternate is present on K325. Residue K393 forms a Glycyl lysine isopeptide (Lys-Gly) (interchain with G-Cter in SUMO2) linkage. The segment at 399–483 (ESRLESGMQN…VSESSDIMSK (85 aa)) is tail. Residues S400, S404, S410, S417, S424, S426, and S432 each carry the phosphoserine modification. A Glycyl lysine isopeptide (Lys-Gly) (interchain with G-Cter in SUMO1); alternate cross-link involves residue K472. Residue K472 forms a Glycyl lysine isopeptide (Lys-Gly) (interchain with G-Cter in SUMO2); alternate linkage. Phosphoserine is present on residues S475, S477, S478, and S482.

It belongs to the intermediate filament family. Heterotetramer of two type I and two type II keratins. Forms a heterodimer with KRT18. Associates with KRT20. Interacts with PNN. When associated with KRT19, interacts with DMD. Interacts with TCHP. Interacts with APEX1. Interacts with GPER1. Interacts with EPPK1. Interacts with PKP1 and PKP2. Post-translationally, O-glycosylated. O-GlcNAcylation at multiple sites increases solubility, and decreases stability by inducing proteasomal degradation. O-glycosylated (O-GlcNAcylated), in a cell cycle-dependent manner. As to expression, expressed in cardiac and striated muscle. Expressed at Z-lines within the muscle fibers and at Z-line and M-line domains at costameres at the sarcolemmal membrane (at protein level). Observed in coagulating gland, bladder, salivary gland, kidney, spleen, thymus, lung and heart. Also observed in ventral prostate, seminal vesicle and liver where expression increases following castration.

It is found in the cytoplasm. The protein resides in the nucleus. The protein localises to the nucleoplasm. It localises to the nucleus matrix. Its function is as follows. Together with KRT19, helps to link the contractile apparatus to dystrophin at the costameres of striated muscle. The polypeptide is Keratin, type II cytoskeletal 8 (Krt8) (Rattus norvegicus (Rat)).